We begin with the raw amino-acid sequence, 114 residues long: MSLGLLCCGAFSLLWAGPVNAGVTQTPKFRVLKTGQSMTLLCAQDMNHEYMYWYRQDPGMGLRLIHYSVGEGTTAKGEVPDGYNVSRLKKQNFLLGLESAAPSQTSVYFCASSY.

Residues 1 to 21 (MSLGLLCCGAFSLLWAGPVNA) form the signal peptide. One can recognise an Ig-like domain in the interval 22–114 (GVTQTPKFRV…TSVYFCASSY (93 aa)). The cysteines at positions 42 and 110 are disulfide-linked. Residue Asn84 is glycosylated (N-linked (GlcNAc...) asparagine).

As to quaternary structure, alpha-beta TR is a heterodimer composed of an alpha and beta chain; disulfide-linked. The alpha-beta TR is associated with the transmembrane signaling CD3 coreceptor proteins to form the TR-CD3 (TcR or TCR). The assembly of alpha-beta TR heterodimers with CD3 occurs in the endoplasmic reticulum where a single alpha-beta TR heterodimer associates with one CD3D-CD3E heterodimer, one CD3G-CD3E heterodimer and one CD247 homodimer forming a stable octameric structure. CD3D-CD3E and CD3G-CD3E heterodimers preferentially associate with TR alpha and TR beta chains, respectively. The association of the CD247 homodimer is the last step of TcR assembly in the endoplasmic reticulum and is required for transport to the cell surface.

The protein resides in the cell membrane. Its function is as follows. V region of the variable domain of T cell receptor (TR) beta chain that participates in the antigen recognition. Alpha-beta T cell receptors are antigen specific receptors which are essential to the immune response and are present on the cell surface of T lymphocytes. Recognize peptide-major histocompatibility (MH) (pMH) complexes that are displayed by antigen presenting cells (APC), a prerequisite for efficient T cell adaptive immunity against pathogens. Binding of alpha-beta TR to pMH complex initiates TR-CD3 clustering on the cell surface and intracellular activation of LCK that phosphorylates the ITAM motifs of CD3G, CD3D, CD3E and CD247 enabling the recruitment of ZAP70. In turn ZAP70 phosphorylates LAT, which recruits numerous signaling molecules to form the LAT signalosome. The LAT signalosome propagates signal branching to three major signaling pathways, the calcium, the mitogen-activated protein kinase (MAPK) kinase and the nuclear factor NF-kappa-B (NF-kB) pathways, leading to the mobilization of transcription factors that are critical for gene expression and essential for T cell growth and differentiation. The T cell repertoire is generated in the thymus, by V-(D)-J rearrangement. This repertoire is then shaped by intrathymic selection events to generate a peripheral T cell pool of self-MH restricted, non-autoaggressive T cells. Post-thymic interaction of alpha-beta TR with the pMH complexes shapes TR structural and functional avidity. This chain is T cell receptor beta variable 6-2, found in Homo sapiens (Human).